A 273-amino-acid polypeptide reads, in one-letter code: Elongation factor Ts (273 aa).

The interval 79 to 82 (TDFV) is involved in Mg(2+) ion dislocation from EF-Tu.

Belongs to the EF-Ts family.

The protein resides in the cytoplasm. Associates with the EF-Tu.GDP complex and induces the exchange of GDP to GTP. It remains bound to the aminoacyl-tRNA.EF-Tu.GTP complex up to the GTP hydrolysis stage on the ribosome. The sequence is that of Elongation factor Ts from Hydrogenobaculum sp. (strain Y04AAS1).